We begin with the raw amino-acid sequence, 87 residues long: Homeotic protein ultrabithorax (87 aa).

An Antp-type hexapeptide motif is present at residues 22–27 (FYPWMA).

The protein belongs to the Antp homeobox family. In the embryo, expression is seen in the epidermis, somatic and visceral mesoderm, and the peripheral and central nervous system.

Its subcellular location is the nucleus. Sequence-specific transcription factor which is part of a developmental regulatory system that provides cells with specific positional identities on the anterior-posterior axis. Binds the consensus region 5'-TTAAT[GT][GA]-3'. This homeotic protein controls development of the cells in the posterior thoracic and first abdominal segments. It activates the synthesis of the decapentaplegic (DPP) growth factor. This Drosophila virilis (Fruit fly) protein is Homeotic protein ultrabithorax (Ubx).